The chain runs to 2050 residues: Unconventional myosin-XVIIIa (2050 aa).

2 stretches are compositionally biased toward basic and acidic residues: residues 1–17 (MFNLMKKDKDKDGGRKE) and 23–34 (EKKERMSAAELR). The disordered stretch occupies residues 1-34 (MFNLMKKDKDKDGGRKEKKEKKEKKERMSAAELR). Positions 1–398 (MFNLMKKDKD…LDVDEDDIEK (398 aa)) are mediates nucleotide-independent binding to F-actin and interaction with GOLPH3. 4 positions are modified to phosphoserine: serine 35, serine 52, serine 72, and serine 74. Phosphothreonine is present on threonine 79. A phosphoserine mark is found at serine 83 and serine 98. Residue threonine 99 is modified to Phosphothreonine. Serine 102 and serine 103 each carry phosphoserine. The short motif at 114–118 (RGSVL) is the Interaction with actin element. Phosphoserine is present on residues serine 140, serine 145, serine 157, serine 160, serine 164, serine 234, and isoleucine 340. The segment at 140–167 (SFSQRSRDESASETSTPSEHSAAPSPQV) is disordered. The 92-residue stretch at 220 to 311 (ELELQRRPTG…SVRLKVQPIP (92 aa)) folds into the PDZ domain. Residues 349 to 401 (TEKVWLVHRDGFSLASQLKSEELSLPEGKARVKLDHDGAILDVDEDDIEKANA) form the Myosin N-terminal SH3-like domain. Positions 405 to 1181 (DRLEDLASLV…TLARLEEQRD (777 aa)) constitute a Myosin motor domain. 498 to 505 (GSSGSGKT) is a binding site for ATP. A phosphoserine mark is found at serine 983, serine 1063, serine 1064, and serine 1066. A disordered region spans residues 1051 to 1071 (PGEPRSASSRRVSSSSELDLP). Over residues 1055–1066 (RSASSRRVSSSS) the composition is skewed to low complexity. The region spanning 1184–1213 (TSRHLTLFQAACRGYLARQHFKKRKIQDLA) is the IQ domain. Positions 1242–1967 (LIQVQLSEEQ…KKNKLEGDSD (726 aa)) form a coiled coil. The tract at residues 1448-1477 (RNHELEKKQRRFDSELSQAHEETQREKLQR) is disordered. Serine 1636 carries the post-translational modification Phosphoserine. The segment at 1848 to 1897 (MEKLTEERDQRAAAENREKEQNKRLQRQLRDTKEEMSELARKEAEASRKK) is disordered. A phosphoserine mark is found at serine 1938, serine 1966, serine 1970, serine 1994, serine 1998, serine 2002, serine 2003, serine 2016, serine 2032, serine 2037, and serine 2039. Residues 1955 to 2050 (YQKKKNKLEG…TEAKLTETSA (96 aa)) are disordered. Phosphothreonine is present on threonine 2041. The segment covering 2041 to 2050 (TEAKLTETSA) has biased composition (basic and acidic residues).

This sequence belongs to the TRAFAC class myosin-kinesin ATPase superfamily. Myosin family. In terms of assembly, homodimer. Forms a tripartite complex with CDC42BPA/CDC42BPB and LURAP1 with the latter acting as an adapter connecting CDC42BPA/CDC42BPB and MYO18A. Binds F-actin; regulated by ADP and GOLPH3. Interacts with GOLPH3; the interaction is direct and may link Golgi membranes to the actin cytoskeleton. Interacts with JAK3. Interacts with MSR1 and CD14. Phosphorylated on tyrosine upon CSF1R activation. Isoform 6 is phosphorylated on Ser-340. In terms of tissue distribution, isoform 1; Expressed ubiquitously. Isoform 2: Specifically expressed in most hematopoietic cells. Isoform 3: Predominantly expressed in alveolar macrophages.

The protein localises to the golgi apparatus. It localises to the trans-Golgi network. It is found in the golgi outpost. The protein resides in the cytoplasm. Its subcellular location is the cytoskeleton. The protein localises to the microtubule organizing center. It localises to the endoplasmic reticulum-Golgi intermediate compartment. Its function is as follows. May link Golgi membranes to the cytoskeleton and participate in the tensile force required for vesicle budding from the Golgi. Thereby, may play a role in Golgi membrane trafficking and could indirectly give its flattened shape to the Golgi apparatus. Alternatively, in concert with LURAP1 and CDC42BPA/CDC42BPB, has been involved in modulating lamellar actomyosin retrograde flow that is crucial to cell protrusion and migration. May be involved in the maintenance of the stromal cell architectures required for cell to cell contact. Regulates trafficking, expression, and activation of innate immune receptors on macrophages. Plays a role to suppress inflammatory responsiveness of macrophages via a mechanism that modulates CD14 trafficking. Acts as a receptor of surfactant-associated protein A (SFTPA1/SP-A) and plays an important role in internalization and clearance of SFTPA1-opsonized S.aureus by alveolar macrophages. Strongly enhances natural killer cell cytotoxicity. This chain is Unconventional myosin-XVIIIa (Myo18a), found in Mus musculus (Mouse).